A 670-amino-acid polypeptide reads, in one-letter code: DUF724 domain-containing protein 1 (670 aa).

Disordered regions lie at residues 283–315 (HNGPQQKPVKESPSNAIKQKPMCSSSGARPMTP) and 368–445 (ANAE…NNDD). Polar residues-rich tracts occupy residues 294 to 309 (SPSNAIKQKPMCSSSG), 379 to 392 (RNQNCLRNDSTQQM), and 426 to 442 (CNGSESEISNTGKSICN). Residues 484–669 (PFAKKLPFWK…LEFQTTVSTP (186 aa)) form the DUF724 domain.

In terms of tissue distribution, expressed in stems and flowers.

It localises to the nucleus. May be involved in the polar growth of plant cells via transportation of RNAs. This chain is DUF724 domain-containing protein 1, found in Arabidopsis thaliana (Mouse-ear cress).